Reading from the N-terminus, the 75-residue chain is Small ribosomal subunit protein bS18c (75 aa).

This sequence belongs to the bacterial ribosomal protein bS18 family. As to quaternary structure, part of the 30S ribosomal subunit.

It is found in the plastid. It localises to the chloroplast. The chain is Small ribosomal subunit protein bS18c from Adiantum capillus-veneris (Maidenhair fern).